We begin with the raw amino-acid sequence, 316 residues long: L-lactate dehydrogenase (316 aa).

Residues Val-15, Asp-37, Lys-42, Tyr-68, and 82–83 (GL) contribute to the NAD(+) site. Residues Gln-85, Arg-91, and 123-126 (NPVD) contribute to the substrate site. NAD(+)-binding positions include 121–123 (ASN) and Thr-146. Substrate is bound at residue 151 to 154 (DTSR). Beta-D-fructose 1,6-bisphosphate contacts are provided by Arg-156 and His-171. The active-site Proton acceptor is the His-178. A Phosphotyrosine modification is found at Tyr-222. Thr-231 contacts substrate.

This sequence belongs to the LDH/MDH superfamily. LDH family. Homotetramer.

The protein localises to the cytoplasm. The catalysed reaction is (S)-lactate + NAD(+) = pyruvate + NADH + H(+). The protein operates within fermentation; pyruvate fermentation to lactate; (S)-lactate from pyruvate: step 1/1. With respect to regulation, allosterically activated by fructose 1,6-bisphosphate (FBP). Catalyzes the conversion of lactate to pyruvate. The polypeptide is L-lactate dehydrogenase (Borreliella burgdorferi (strain ATCC 35210 / DSM 4680 / CIP 102532 / B31) (Borrelia burgdorferi)).